The primary structure comprises 418 residues: MEKTQSVFIRFIVNGSLVKQILIGLVAGIVLALVSTPAAIAVGLLGSLFVGALKAVAPVLVLMLVIASIANHKKGQKTSIRPILFLYVLGTFSAALVAVVVSFIYPSTLILVAESADITPPSGIVEVLHGLLNSIIANPIHALLNANYIGILAWAVGLGIALRHAADTTKALINDMSDAVTLVVRVVIRFAPLGIFGLVASTIAATGFGALQLYAQLLVVLIGCMLLVALVVNPLIVYWKIRRNPYPLVFACLRESGVTAFFTRSSAANIPVNMEMCKKMNLNEDTYSISIPLGATINMAGAAITITVLTLAAVHTLGITVDLPTALLLSVVAAICACGASGVAGGSLLLIPLACSMFGIPNDVAMQVVGVGFIIGVLQDSAETALNSSTDVLFTAAVCQAEDAKLANPDPLAAGKSV.

8 consecutive transmembrane segments (helical) span residues 21–41 (ILIGLVAGIVLALVSTPAAIA), 49–69 (FVGALKAVAPVLVLMLVIASI), 83–103 (ILFLYVLGTFSAALVAVVVSF), 142–162 (ALLNANYIGILAWAVGLGIAL), 190–210 (FAPLGIFGLVASTIAATGFGA), 217–237 (LLVVLIGCMLLVALVVNPLIV), 299–319 (MAGAAITITVLTLAAVHTLGI), and 331–351 (VVAAICACGASGVAGGSLLLI).

Belongs to the dicarboxylate/amino acid:cation symporter (DAACS) (TC 2.A.23) family.

The protein localises to the cell inner membrane. It carries out the reaction L-serine(in) + Na(+)(in) = L-serine(out) + Na(+)(out). The catalysed reaction is L-threonine(in) + Na(+)(in) = L-threonine(out) + Na(+)(out). Involved in the import of serine and threonine into the cell, with the concomitant import of sodium (symport system). The sequence is that of Serine/threonine transporter SstT from Yersinia pestis bv. Antiqua (strain Antiqua).